Reading from the N-terminus, the 59-residue chain is U-scoloptoxin(23)-Er2a (59 aa).

This sequence belongs to the scoloptoxin-23 family. Post-translationally, contains 1 disulfide bond. In terms of tissue distribution, expressed by the venom gland.

The protein resides in the secreted. The protein is U-scoloptoxin(23)-Er2a of Ethmostigmus rubripes (Giant centipede).